A 183-amino-acid polypeptide reads, in one-letter code: Ribosome-recycling factor (183 aa).

The protein belongs to the RRF family.

The protein resides in the cytoplasm. Responsible for the release of ribosomes from messenger RNA at the termination of protein biosynthesis. May increase the efficiency of translation by recycling ribosomes from one round of translation to another. The protein is Ribosome-recycling factor of Clostridium tetani (strain Massachusetts / E88).